We begin with the raw amino-acid sequence, 324 residues long: tRNA U34 carboxymethyltransferase (324 aa).

Residues Lys-92, Trp-106, Lys-111, Gly-131, 181 to 182 (LE), Met-197, Tyr-201, and Arg-316 contribute to the carboxy-S-adenosyl-L-methionine site.

Belongs to the class I-like SAM-binding methyltransferase superfamily. CmoB family. As to quaternary structure, homotetramer.

The enzyme catalyses carboxy-S-adenosyl-L-methionine + 5-hydroxyuridine(34) in tRNA = 5-carboxymethoxyuridine(34) in tRNA + S-adenosyl-L-homocysteine + H(+). Functionally, catalyzes carboxymethyl transfer from carboxy-S-adenosyl-L-methionine (Cx-SAM) to 5-hydroxyuridine (ho5U) to form 5-carboxymethoxyuridine (cmo5U) at position 34 in tRNAs. The chain is tRNA U34 carboxymethyltransferase from Syntrophotalea carbinolica (strain DSM 2380 / NBRC 103641 / GraBd1) (Pelobacter carbinolicus).